The primary structure comprises 682 residues: DNA-directed RNA polymerase subunit beta' (682 aa).

Zn(2+)-binding residues include Cys69, Cys71, Cys87, and Cys90. Asp489, Asp491, and Asp493 together coordinate Mg(2+).

It belongs to the RNA polymerase beta' chain family. RpoC1 subfamily. In plastids the minimal PEP RNA polymerase catalytic core is composed of four subunits: alpha, beta, beta', and beta''. When a (nuclear-encoded) sigma factor is associated with the core the holoenzyme is formed, which can initiate transcription. Mg(2+) serves as cofactor. The cofactor is Zn(2+).

The protein localises to the plastid. It is found in the chloroplast. It catalyses the reaction RNA(n) + a ribonucleoside 5'-triphosphate = RNA(n+1) + diphosphate. Functionally, DNA-dependent RNA polymerase catalyzes the transcription of DNA into RNA using the four ribonucleoside triphosphates as substrates. This Hordeum vulgare (Barley) protein is DNA-directed RNA polymerase subunit beta'.